Reading from the N-terminus, the 422-residue chain is Dihydroorotase (422 aa).

Zn(2+) contacts are provided by histidine 61 and histidine 63. Residues 63–65 (HLR) and asparagine 95 contribute to the substrate site. Residue aspartate 153 participates in Zn(2+) binding. Asparagine 278 serves as a coordination point for substrate. Zn(2+) is bound at residue aspartate 305. The active site involves aspartate 305. Residues histidine 309 and 322–323 (PG) contribute to the substrate site.

It belongs to the metallo-dependent hydrolases superfamily. DHOase family. Class I DHOase subfamily. Monomer. Forms a 1:1 stoichiometric complex with PyrB. The complex exists as an equilibrium mixture of heterohexamers, composed of 3 PyrC and 3 PyrB subunits, and dodecamers. The complex has both DHOase and ATCase activities. The cofactor is Zn(2+).

It carries out the reaction (S)-dihydroorotate + H2O = N-carbamoyl-L-aspartate + H(+). Its pathway is pyrimidine metabolism; UMP biosynthesis via de novo pathway; (S)-dihydroorotate from bicarbonate: step 3/3. Its activity is regulated as follows. The monomer has very low activity by itself. Activated several thousandfold by formation of a complex with PyrB aspartate carbamoyltransferase (ATCase). Functionally, catalyzes the reversible cyclization of carbamoyl aspartate to dihydroorotate. The protein is Dihydroorotase of Aquifex aeolicus (strain VF5).